The following is a 321-amino-acid chain: MFMYPYIVADIGGTNARFALVTGKKGNAFNLEQIQILNGSEFPRLQDAMQHYIDTLGGEKPKAACVAIAGPIDGDNARMTNLNWEFSQAAVKAEFGFDKYDTLNDFGALAVATSSLQADNLIEIKAGTMDPKGNKAILGPGTGLGVAGLACAGDSWLPIPSEGGHVNVAPATQLECEVIRAAMAEHGHVSAETFISGPGLVRLYRALATVRGETPKNYEPKDITAGALDGTDDLCKETLDLFCSFIGSLSGNLALTYGAKGGVYLAGGVLPRFIDYFKSSDFVKRFSEKGVMSHYVENIPVNLISYEYTAFVGAAAWLDQL.

9–14 (ADIGGT) provides a ligand contact to ATP.

The protein belongs to the bacterial glucokinase family.

The protein localises to the cytoplasm. The enzyme catalyses D-glucose + ATP = D-glucose 6-phosphate + ADP + H(+). In Saccharophagus degradans (strain 2-40 / ATCC 43961 / DSM 17024), this protein is Glucokinase.